The following is a 143-amino-acid chain: Transcriptional regulator MraZ (143 aa).

2 consecutive SpoVT-AbrB domains span residues 5–47 (EYQH…PMSE) and 76–119 (ATEC…SKEI).

The protein belongs to the MraZ family. As to quaternary structure, forms oligomers.

The protein resides in the cytoplasm. Its subcellular location is the nucleoid. This is Transcriptional regulator MraZ from Bacillus licheniformis (strain ATCC 14580 / DSM 13 / JCM 2505 / CCUG 7422 / NBRC 12200 / NCIMB 9375 / NCTC 10341 / NRRL NRS-1264 / Gibson 46).